A 710-amino-acid polypeptide reads, in one-letter code: uncharacterized protein (710 aa).

A disordered region spans residues 1–20; that stretch reads MKQRQARLIGTPSQTRRQQE. Residues 13-42 adopt a coiled-coil conformation; sequence SQTRRQQELAEKLEKVKEVLEDEKKRQFNE.

It belongs to the IIV-6 268L family.

This is an uncharacterized protein from Invertebrate iridescent virus 6 (IIV-6).